A 190-amino-acid chain; its full sequence is MARANEIKRGMAVNLNGKLLLVKDIDVQSPSARGASTLYKMRFSDVRTGLKVEERFKGDEILDTITLTRRSVNFSYIDGDEYVFMDDEDFTPYNFKKEQIEEELLFIPEGGMPGMQVLTMDGQLLALELPQTVDMEIVETAPSIKGASASARNKPAVMSTGLSIQVPEYISPGEKIRIHIVERRYMGRAD.

Belongs to the elongation factor P family.

The polypeptide is Elongation factor P-like protein (Yersinia enterocolitica serotype O:8 / biotype 1B (strain NCTC 13174 / 8081)).